The primary structure comprises 664 residues: Phosphomethylpyrimidine synthase (664 aa).

Polar residues-rich tracts occupy residues 1–10 (MSTEPLSINP) and 17–27 (SATQEPSTSSK). Positions 1-37 (MSTEPLSINPLSAKPLSATQEPSTSSKPSRREQRAAA) are disordered. Substrate contacts are provided by residues N261, M290, Y319, H355, 375–377 (SRG), 416–419 (DGLR), and E455. Zn(2+) is bound at residue H459. Position 482 (Y482) interacts with substrate. Zn(2+) is bound at residue H523. C603, C606, and C611 together coordinate [4Fe-4S] cluster.

Belongs to the ThiC family. In terms of assembly, homodimer. Requires [4Fe-4S] cluster as cofactor.

The enzyme catalyses 5-amino-1-(5-phospho-beta-D-ribosyl)imidazole + S-adenosyl-L-methionine = 4-amino-2-methyl-5-(phosphooxymethyl)pyrimidine + CO + 5'-deoxyadenosine + formate + L-methionine + 3 H(+). Its pathway is cofactor biosynthesis; thiamine diphosphate biosynthesis. Its function is as follows. Catalyzes the synthesis of the hydroxymethylpyrimidine phosphate (HMP-P) moiety of thiamine from aminoimidazole ribotide (AIR) in a radical S-adenosyl-L-methionine (SAM)-dependent reaction. This is Phosphomethylpyrimidine synthase from Pectobacterium atrosepticum (strain SCRI 1043 / ATCC BAA-672) (Erwinia carotovora subsp. atroseptica).